A 350-amino-acid polypeptide reads, in one-letter code: Probable L-aspartate decarboxylase (350 aa).

Residue Lys-206 is modified to N6-(pyridoxal phosphate)lysine.

The protein belongs to the group II decarboxylase family. MfnA subfamily. Requires pyridoxal 5'-phosphate as cofactor.

The enzyme catalyses L-aspartate + H(+) = beta-alanine + CO2. It functions in the pathway cofactor biosynthesis; coenzyme A biosynthesis. In terms of biological role, catalyzes the decarboxylation of L-aspartate to produce beta-alanine. This Haloarcula marismortui (strain ATCC 43049 / DSM 3752 / JCM 8966 / VKM B-1809) (Halobacterium marismortui) protein is Probable L-aspartate decarboxylase.